Reading from the N-terminus, the 250-residue chain is Transmembrane protein 106C (250 aa).

The segment at 1–25 is disordered; the sequence is MGSQHSAAARPSSCRRKQEDDRDGL. A lipid anchor (N-myristoyl glycine) is attached at Gly-2. The span at 16 to 25 shows a compositional bias: basic and acidic residues; that stretch reads RKQEDDRDGL. The helical transmembrane segment at 87 to 107 threads the bilayer; it reads YVLLSILLCLLASGLVVFFLF. 2 N-linked (GlcNAc...) asparagine glycosylation sites follow: Asn-173 and Asn-186. The helical transmembrane segment at 197–217 threads the bilayer; that stretch reads FSYVYFFCTVPEILVHNIVIF.

It belongs to the TMEM106 family. As to quaternary structure, interacts with TMEM106B.

It localises to the endoplasmic reticulum membrane. It is found in the membrane. In Homo sapiens (Human), this protein is Transmembrane protein 106C (TMEM106C).